The chain runs to 142 residues: Hemoglobin subunit alpha (142 aa).

Ser-1 is modified (N-acetylserine). One can recognise a Globin domain in the interval 1–142; the sequence is SLSDKDKAAV…VALALAERYR (142 aa). His-59 is an O2 binding site. Residue His-88 participates in heme b binding.

The protein belongs to the globin family. Hb1 is a heterotetramer of two alpha chains and two beta chains. HbC is a heterotetramer of two alpha chains and two beta-C chains. Red blood cells.

Involved in oxygen transport from gills to the various peripheral tissues. This Trematomus bernacchii (Emerald rockcod) protein is Hemoglobin subunit alpha (hba).